The primary structure comprises 456 residues: Bifunctional protein GlmU (456 aa).

The interval Met-1–Lys-228 is pyrophosphorylase. Residues Leu-11 to Gly-14, Lys-25, Gln-75, Gly-80 to Thr-81, Tyr-102 to Asp-104, Gly-138, Glu-153, Asn-168, and Asn-226 each bind UDP-N-acetyl-alpha-D-glucosamine. Residue Asp-104 coordinates Mg(2+). Asn-226 lines the Mg(2+) pocket. Positions Arg-229–Ala-249 are linker. Residues Gly-250–Gln-456 are N-acetyltransferase. UDP-N-acetyl-alpha-D-glucosamine contacts are provided by Arg-332 and Lys-350. Catalysis depends on His-362, which acts as the Proton acceptor. Tyr-365 and Asn-376 together coordinate UDP-N-acetyl-alpha-D-glucosamine. Acetyl-CoA-binding positions include Ala-379, Asn-385 to Tyr-386, Ser-404, Ala-422, and Arg-439.

It in the N-terminal section; belongs to the N-acetylglucosamine-1-phosphate uridyltransferase family. This sequence in the C-terminal section; belongs to the transferase hexapeptide repeat family. Homotrimer. Requires Mg(2+) as cofactor.

Its subcellular location is the cytoplasm. It carries out the reaction alpha-D-glucosamine 1-phosphate + acetyl-CoA = N-acetyl-alpha-D-glucosamine 1-phosphate + CoA + H(+). It catalyses the reaction N-acetyl-alpha-D-glucosamine 1-phosphate + UTP + H(+) = UDP-N-acetyl-alpha-D-glucosamine + diphosphate. The protein operates within nucleotide-sugar biosynthesis; UDP-N-acetyl-alpha-D-glucosamine biosynthesis; N-acetyl-alpha-D-glucosamine 1-phosphate from alpha-D-glucosamine 6-phosphate (route II): step 2/2. Its pathway is nucleotide-sugar biosynthesis; UDP-N-acetyl-alpha-D-glucosamine biosynthesis; UDP-N-acetyl-alpha-D-glucosamine from N-acetyl-alpha-D-glucosamine 1-phosphate: step 1/1. It functions in the pathway bacterial outer membrane biogenesis; LPS lipid A biosynthesis. In terms of biological role, catalyzes the last two sequential reactions in the de novo biosynthetic pathway for UDP-N-acetylglucosamine (UDP-GlcNAc). The C-terminal domain catalyzes the transfer of acetyl group from acetyl coenzyme A to glucosamine-1-phosphate (GlcN-1-P) to produce N-acetylglucosamine-1-phosphate (GlcNAc-1-P), which is converted into UDP-GlcNAc by the transfer of uridine 5-monophosphate (from uridine 5-triphosphate), a reaction catalyzed by the N-terminal domain. This is Bifunctional protein GlmU from Neisseria gonorrhoeae (strain ATCC 700825 / FA 1090).